The primary structure comprises 351 residues: Divinyl chlorophyll a/b light-harvesting protein PcbC (351 aa).

The next 6 helical transmembrane spans lie at 27–47 (FIAAHAAHAGLMMFWAGAFTL), 64–84 (LICLPHLAGLGIGGVSNGVIT), 89–109 (CTVIAVLHLIFSGVLGAGGLL), 203–223 (VMGGHAFLAFFLIIGGAFHIA), 244–264 (VLSYSLAGVAYCAFVAAFWCA), and 306–326 (LSNVHFYLGFFFLQGHLWHAL).

This sequence belongs to the PsbB/PsbC family. IsiA/Pcb subfamily. In terms of assembly, the antenna complex consists of divinyl chlorophylls (a and b) and divinyl chlorophyll a/b binding proteins and binds more divinyl chlorophyll b than does the antenna complex from high-light-adapted Prochlorococcus. Divinyl chlorophyll a serves as cofactor. The cofactor is divinyl chlorophyll b.

The protein localises to the cellular thylakoid membrane. Its function is as follows. The antenna complex functions as a light receptor, it captures and delivers excitation energy to photosystems II and I. The Prochlorales pcb genes are not related to higher plant LHCs. This Prochlorococcus marinus (strain SARG / CCMP1375 / SS120) protein is Divinyl chlorophyll a/b light-harvesting protein PcbC (pcbC).